A 169-amino-acid chain; its full sequence is Disulfide bond formation protein B 1 (169 aa).

Residues 1-14 (MSDNTLYLRREKRF) lie on the Cytoplasmic side of the membrane. Residues 15 to 31 (LVLLGIICLALIGGALY) form a helical membrane-spanning segment. At 32 to 49 (MQVVLDEAPCPLCILQRY) the chain is on the periplasmic side. Cys41 and Cys44 form a disulfide bridge. A helical transmembrane segment spans residues 50-65 (ALLFIAIFAFIGAAMP). Residues 66-72 (GRRSVTA) are Cytoplasmic-facing. The chain crosses the membrane as a helical span at residues 73–89 (FETLVTLSALGGIAAAG). Residues 90-144 (RHVWILAHPSDSCGIDVLQPIVDGLPLATLFPTGFQVSGFCTTPYPPVLGLSLAQ) lie on the Periplasmic side of the membrane. Cys102 and Cys130 form a disulfide bridge. Residues 145-163 (WALTAFVLTAVLVPACIIR) traverse the membrane as a helical segment. The Cytoplasmic portion of the chain corresponds to 164 to 169 (NRRKPY).

It belongs to the DsbB family.

It is found in the cell inner membrane. In terms of biological role, required for disulfide bond formation in some periplasmic proteins. Acts by oxidizing the DsbA protein. The protein is Disulfide bond formation protein B 1 of Pseudomonas syringae pv. syringae (strain B728a).